The following is a 425-amino-acid chain: MRDPPAPLFRRDNMLEFYFSYRGVLKRLRSGALGGEMDRLAEHFLTLGYKRASAKIYLSRVARFSQFAATRCGLMPIHQDVIDSYLGTFTTDTPRIGAVSALAHARRVAPERFIIPVPSEEADPDALLLASFSDYLRTVRGLEPKTREGILLGGRRFLDWFRHRHPGQNLEALTAEHVLAAVEHRLSLSATSGTRTAATSHIRTFLRFLCWAGHHRQDLARIVPRTPYWRLAHLPPRLAWGDVRRAIDAIGATTPVAIRDRAVLLLLATTGIRNGELRAIRLQDIDWRTGEVFIRRTKGKRDRVVPLLEETGAALVDYILRARPKVDSPYLFLSFTPPVGAFKSAAPVSRIVRKRLRHGGVELGRVAGAHLLRHSLATQLVGQRRPINEVADLLGHRSINTTALYVKVAASQLAEVALPFPGGAA.

In terms of domain architecture, Core-binding (CB) spans 123–210 (DPDALLLASF…HIRTFLRFLC (88 aa)). One can recognise a Tyr recombinase domain in the interval 233–418 (HLPPRLAWGD…AASQLAEVAL (186 aa)). Active-site residues include Arg273, Lys298, His370, Arg373, and His396. The O-(3'-phospho-DNA)-tyrosine intermediate role is filled by Tyr405.

Belongs to the 'phage' integrase family.

The protein is Putative integrase/recombinase y4rF of Sinorhizobium fredii (strain NBRC 101917 / NGR234).